Consider the following 176-residue polypeptide: Ribosome maturation factor RimM (176 aa).

The region spanning 100–173 (PEEYYDYQLI…RLRIDPPPGL (74 aa)) is the PRC barrel domain.

Belongs to the RimM family. As to quaternary structure, binds ribosomal protein uS19.

It is found in the cytoplasm. Its function is as follows. An accessory protein needed during the final step in the assembly of 30S ribosomal subunit, possibly for assembly of the head region. Essential for efficient processing of 16S rRNA. May be needed both before and after RbfA during the maturation of 16S rRNA. It has affinity for free ribosomal 30S subunits but not for 70S ribosomes. This is Ribosome maturation factor RimM from Acidothermus cellulolyticus (strain ATCC 43068 / DSM 8971 / 11B).